Here is a 79-residue protein sequence, read N- to C-terminus: MPKELKELKDYLSVLKRPDARSVVVYKKKSKGGLLSTKFKVRCSRYLYTFSVPNQVKAAKVEATIPSHLEKKVITNKKN.

Belongs to the eukaryotic ribosomal protein eL38 family.

The polypeptide is Large ribosomal subunit protein eL38 (RPL38) (Theileria parva (East coast fever infection agent)).